Reading from the N-terminus, the 154-residue chain is Large ribosomal subunit protein bL17 (154 aa).

Residues 127–154 (TAAKQDRAKRVKGSKKAETEKEGGESAE) are disordered. Residues 141-154 (KKAETEKEGGESAE) are compositionally biased toward basic and acidic residues.

The protein belongs to the bacterial ribosomal protein bL17 family. In terms of assembly, part of the 50S ribosomal subunit. Contacts protein L32.

In Chlorobaculum parvum (strain DSM 263 / NCIMB 8327) (Chlorobium vibrioforme subsp. thiosulfatophilum), this protein is Large ribosomal subunit protein bL17.